The following is a 172-amino-acid chain: Phosphopantetheine adenylyltransferase (172 aa).

A substrate-binding site is contributed by threonine 14. Residues 14–15 (TF) and histidine 22 contribute to the ATP site. Substrate-binding residues include lysine 46, leucine 78, and arginine 92. ATP is bound by residues 93 to 95 (GLR), glutamate 103, and 128 to 134 (WLYISST).

It belongs to the bacterial CoaD family. Homohexamer. It depends on Mg(2+) as a cofactor.

Its subcellular location is the cytoplasm. The catalysed reaction is (R)-4'-phosphopantetheine + ATP + H(+) = 3'-dephospho-CoA + diphosphate. Its pathway is cofactor biosynthesis; coenzyme A biosynthesis; CoA from (R)-pantothenate: step 4/5. Reversibly transfers an adenylyl group from ATP to 4'-phosphopantetheine, yielding dephospho-CoA (dPCoA) and pyrophosphate. This chain is Phosphopantetheine adenylyltransferase, found in Lawsonia intracellularis (strain PHE/MN1-00).